The sequence spans 451 residues: Cytosolic Fe-S cluster assembly factor NAR1 (451 aa).

[4Fe-4S] cluster contacts are provided by cysteine 20, cysteine 56, cysteine 59, cysteine 62, cysteine 166, cysteine 213, cysteine 382, and cysteine 386.

It belongs to the NARF family.

Component of the cytosolic Fe/S protein assembly machinery. Required for maturation of extramitochondrial Fe/S proteins. May play a role in the transfer of pre-assembled Fe/S clusters to target apoproteins. This Eremothecium gossypii (strain ATCC 10895 / CBS 109.51 / FGSC 9923 / NRRL Y-1056) (Yeast) protein is Cytosolic Fe-S cluster assembly factor NAR1 (NAR1).